Reading from the N-terminus, the 742-residue chain is Clamp-binding protein CrfC (742 aa).

Positions 41–45 (QLALP) are clamp-binding consensus. In terms of domain architecture, Dynamin-type G spans 66 to 402 (SRLEMVLAIV…LWEDSLFAQP (337 aa)). The G1 motif stretch occupies residues 76–83 (GTMKAGKS). The G2 motif stretch occupies residues 102 to 104 (MTA). Residues 236 to 239 (DTPG) are G3 motif. The tract at residues 297-300 (NKFD) is G4 motif. The G5 motif stretch occupies residues 331 to 334 (FPVS). Residues 440–472 (RAHGLNVACEQLRQNIHQVEESLQLLQLNQAQV) adopt a coiled-coil conformation.

This sequence belongs to the TRAFAC class dynamin-like GTPase superfamily. Dynamin/Fzo/YdjA family. Forms homooligomers. Binds to the beta sliding clamp processivity factor (DnaN) in the presence and absence of DNA, may bind to the clamp itself as homodimers or trimers. Homooligomers may be able to bind more than 1 clamp complex.

It localises to the cytoplasm. In terms of biological role, important for the colocalization of sister nascent DNA strands after replication fork passage during DNA replication, and for positioning and subsequent partitioning of sister chromosomes. Does not have GTPase activity on its own. This Escherichia coli protein is Clamp-binding protein CrfC (crfC).